A 338-amino-acid chain; its full sequence is GTPase Obg (338 aa).

The region spanning 1-159 (MSFIDEVKIH…RWLRLELKLM (159 aa)) is the Obg domain. The OBG-type G domain occupies 160–331 (ADVGLLGMPS…LLDEIARNLW (172 aa)). Residues 166–173 (GMPSVGKS), 191–195 (FTTLK), 213–216 (DIPG), 283–286 (NKID), and 312–314 (SAA) each bind GTP. Mg(2+) contacts are provided by Ser-173 and Thr-193.

The protein belongs to the TRAFAC class OBG-HflX-like GTPase superfamily. OBG GTPase family. Monomer. The cofactor is Mg(2+).

It localises to the cytoplasm. In terms of biological role, an essential GTPase which binds GTP, GDP and possibly (p)ppGpp with moderate affinity, with high nucleotide exchange rates and a fairly low GTP hydrolysis rate. Plays a role in control of the cell cycle, stress response, ribosome biogenesis and in those bacteria that undergo differentiation, in morphogenesis control. In Geotalea uraniireducens (strain Rf4) (Geobacter uraniireducens), this protein is GTPase Obg.